Consider the following 460-residue polypeptide: MYLKKHESKLLLIPKNEDKEDAGIIAVLTDRVPSVLIVRWFDLFCFGFAMCSYVLDFFSDIGIAIFHFWAGRHLSGALVLTFALIPSVIINIISMVWMLDDEMHWKRRAHPRRTGTFELNQKRFISLGKMITLCIFQMGPLFWYYKALYYGWMFTKNKKDDTDKEKRKFFMKMVEAERDATLLRFFEAFLESAPQLIIQGSIAANYFQNYYISGKYPYWLYFQAASLTLSIISISWSVVVQNRSLRMTRDDKVNIWPHEAVLQFCWRFLTILARIITLVAFVLLFGIYVVFLIFGHLIVTLVHVIFLQALHIEACTHIEKLLLLINAMIHLFTPFNMAEGNTRYRYLVAYTVEFIEMMIIFLLLPTPLDAFPLIEKIRIGVPATFFIGIFIMLIYYKFFHPNRRQDLEAPNVERNEKLVVSELNGIPSAAIEKAEHIEEIEEHSVPTTSESLLEEDECHN.

At 1 to 45 (MYLKKHESKLLLIPKNEDKEDAGIIAVLTDRVPSVLIVRWFDLFC) the chain is on the cytoplasmic side. Residues 46–66 (FGFAMCSYVLDFFSDIGIAIF) form a helical membrane-spanning segment. Over 67-77 (HFWAGRHLSGA) the chain is Extracellular. A helical membrane pass occupies residues 78-98 (LVLTFALIPSVIINIISMVWM). Topologically, residues 99 to 123 (LDDEMHWKRRAHPRRTGTFELNQKR) are cytoplasmic. The chain crosses the membrane as a helical span at residues 124–144 (FISLGKMITLCIFQMGPLFWY). Residues 145–219 (YKALYYGWMF…YYISGKYPYW (75 aa)) lie on the Extracellular side of the membrane. Residues 220 to 240 (LYFQAASLTLSIISISWSVVV) form a helical membrane-spanning segment. The Cytoplasmic segment spans residues 241–274 (QNRSLRMTRDDKVNIWPHEAVLQFCWRFLTILAR). The helical transmembrane segment at 275–295 (IITLVAFVLLFGIYVVFLIFG) threads the bilayer. The Extracellular segment spans residues 296–320 (HLIVTLVHVIFLQALHIEACTHIEK). A helical membrane pass occupies residues 321 to 341 (LLLLINAMIHLFTPFNMAEGN). Residues 342-353 (TRYRYLVAYTVE) lie on the Cytoplasmic side of the membrane. A helical membrane pass occupies residues 354-374 (FIEMMIIFLLLPTPLDAFPLI). Residues 375–378 (EKIR) lie on the Extracellular side of the membrane. The helical transmembrane segment at 379 to 399 (IGVPATFFIGIFIMLIYYKFF) threads the bilayer. Over 400-460 (HPNRRQDLEA…SLLEEDECHN (61 aa)) the chain is Cytoplasmic.

This sequence belongs to the XK family. In terms of processing, cleavage by ced-3 activates ced-8 function in promoting phosphatidylserine exposure at the surface of apoptotic cells.

The protein localises to the cell membrane. In terms of biological role, acts downstream of ced-9 and caspase ced-3 to promote phosphatidylserine exposure on apoptotic cell surface, possibly by mediating phospholipid scrambling. Phosphatidylserine is a specific marker only present at the surface of apoptotic cells and acts as a specific signal for engulfment. Regulates apoptosis kinetics during embryonic development. Not required for engulfment of germ cell corpses. The protein is Cell death abnormality protein 8 of Caenorhabditis briggsae.